A 523-amino-acid polypeptide reads, in one-letter code: 3-hydroxybenzoate--CoA ligase (523 aa).

The protein belongs to the ATP-dependent AMP-binding enzyme family. Benzoate-CoA ligase subfamily.

It catalyses the reaction 3-hydroxybenzoate + ATP + CoA = 3-hydroxybenzoyl-CoA + AMP + diphosphate. It carries out the reaction 4-hydroxybenzoate + ATP + CoA = 4-hydroxybenzoyl-CoA + AMP + diphosphate. In terms of biological role, ligase involved in the anaerobic degradation of 3-hydroxybenzoate (3OHBz). Catalyzes the activation of 3-hydroxybenzoate to 3-hydroxybenzoyl-CoA. Also shows high activity with protocatechuate and 4-hydroxybenzoate. Exhibits lower activity with benzoate, but cannot use 2-hydroxybenzoate or benzoate analogs containing other substituents at the ortho position, such as 2-aminobenzoate (anthranilate). The protein is 3-hydroxybenzoate--CoA ligase of Aromatoleum sp. (strain CIB) (Azoarcus sp. (strain CIB)).